Here is a 188-residue protein sequence, read N- to C-terminus: Probable thiol:disulfide interchange protein DsbE-2 (188 aa).

Over 1 to 11 (MSMLHQQKRKN) the chain is Cytoplasmic. The chain crosses the membrane as a helical span at residues 12–32 (HFVFLPLVILLAVCALLFIGL). Residues 33-188 (QQDPQKIASA…KLEAENAKVR (156 aa)) are Periplasmic-facing. Residues 42 to 179 (ALIGKPVPTF…QEMFIPEWQK (138 aa)) form the Thioredoxin domain. Cys82 and Cys85 are disulfide-bonded.

This sequence belongs to the thioredoxin family. DsbE subfamily.

It is found in the cell inner membrane. In terms of biological role, could be involved in disulfide bond formation. Could catalyzes a late, reductive step in the assembly of periplasmic NrfA c-type cytochrome, probably the reduction of disulfide bonds of the apocytochrome c to allow covalent linkage with the heme. Possible subunit of a heme lyase. The polypeptide is Probable thiol:disulfide interchange protein DsbE-2 (nrfX) (Pasteurella multocida (strain Pm70)).